A 517-amino-acid polypeptide reads, in one-letter code: Xylosidase/arabinosidase (517 aa).

The active-site Proton acceptor is the D15. E185 (proton donor) is an active-site residue.

Belongs to the glycosyl hydrolase 43 family.

It catalyses the reaction Hydrolysis of (1-&gt;4)-beta-D-xylans, to remove successive D-xylose residues from the non-reducing termini.. The enzyme catalyses Hydrolysis of terminal non-reducing alpha-L-arabinofuranoside residues in alpha-L-arabinosides.. Functionally, has a 1.6-fold higher activity as an arabinosidase than as a beta-xylosidase when tested on the substrates nitrophenyl-beta-D-xylopyranoside and P-nitrophenyl-alpha-L-arabinofuranoside. The polypeptide is Xylosidase/arabinosidase (xylB) (Butyrivibrio fibrisolvens).